We begin with the raw amino-acid sequence, 47 residues long: Lysis protein for colicin E8 (47 aa).

Positions 1–19 (MKKITGIILLLLAVIILAA) are cleaved as a signal peptide. Cys20 is lipidated: N-palmitoyl cysteine. Cys20 carries the S-diacylglycerol cysteine lipid modification.

The protein resides in the cell outer membrane. Lysis proteins are required for both colicin release and partial cell lysis. The sequence is that of Lysis protein for colicin E8 (lys) from Escherichia coli.